The sequence spans 300 residues: tRNA pseudouridine synthase B (300 aa).

The active-site Nucleophile is Asp38.

It belongs to the pseudouridine synthase TruB family. Type 1 subfamily.

It carries out the reaction uridine(55) in tRNA = pseudouridine(55) in tRNA. Its function is as follows. Responsible for synthesis of pseudouridine from uracil-55 in the psi GC loop of transfer RNAs. The chain is tRNA pseudouridine synthase B from Anaplasma phagocytophilum (strain HZ).